Consider the following 236-residue polypeptide: uncharacterized protein (236 aa).

This is an uncharacterized protein from Aquifex aeolicus (strain VF5).